A 276-amino-acid chain; its full sequence is Light-independent protochlorophyllide reductase iron-sulfur ATP-binding protein (276 aa).

Residues Gly-12–Thr-17 and Lys-41 contribute to the ATP site. Ser-16 is a Mg(2+) binding site. 2 residues coordinate [4Fe-4S] cluster: Cys-97 and Cys-131. Asn-182–Arg-183 lines the ATP pocket.

This sequence belongs to the NifH/BchL/ChlL family. As to quaternary structure, homodimer. Protochlorophyllide reductase is composed of three subunits; BchL, BchN and BchB. [4Fe-4S] cluster serves as cofactor.

The catalysed reaction is chlorophyllide a + oxidized 2[4Fe-4S]-[ferredoxin] + 2 ADP + 2 phosphate = protochlorophyllide a + reduced 2[4Fe-4S]-[ferredoxin] + 2 ATP + 2 H2O. The protein operates within porphyrin-containing compound metabolism; bacteriochlorophyll biosynthesis (light-independent). In terms of biological role, component of the dark-operative protochlorophyllide reductase (DPOR) that uses Mg-ATP and reduced ferredoxin to reduce ring D of protochlorophyllide (Pchlide) to form chlorophyllide a (Chlide). This reaction is light-independent. The L component serves as a unique electron donor to the NB-component of the complex, and binds Mg-ATP. This chain is Light-independent protochlorophyllide reductase iron-sulfur ATP-binding protein, found in Chlorobaculum tepidum (strain ATCC 49652 / DSM 12025 / NBRC 103806 / TLS) (Chlorobium tepidum).